The sequence spans 395 residues: ATP synthase subunit beta, chloroplastic (395 aa).

72-79 is a binding site for ATP; it reads GGAGVGKT.

The protein belongs to the ATPase alpha/beta chains family. In terms of assembly, F-type ATPases have 2 components, CF(1) - the catalytic core - and CF(0) - the membrane proton channel. CF(1) has five subunits: alpha(3), beta(3), gamma(1), delta(1), epsilon(1). CF(0) has four main subunits: a(1), b(1), b'(1) and c(9-12).

It is found in the plastid. The protein resides in the chloroplast thylakoid membrane. The enzyme catalyses ATP + H2O + 4 H(+)(in) = ADP + phosphate + 5 H(+)(out). In terms of biological role, produces ATP from ADP in the presence of a proton gradient across the membrane. The catalytic sites are hosted primarily by the beta subunits. This is ATP synthase subunit beta, chloroplastic from Microlepia platyphylla (Plate fern).